A 398-amino-acid polypeptide reads, in one-letter code: Argininosuccinate synthase (398 aa).

8 to 16 lines the ATP pocket; sequence AYSGGLDTS. Tyrosine 87 contributes to the L-citrulline binding site. Glycine 117 contributes to the ATP binding site. Residues threonine 119, asparagine 123, and aspartate 124 each contribute to the L-aspartate site. Position 123 (asparagine 123) interacts with L-citrulline. Positions 127, 175, 260, and 272 each coordinate L-citrulline.

Belongs to the argininosuccinate synthase family. Type 1 subfamily. As to quaternary structure, homotetramer.

Its subcellular location is the cytoplasm. The enzyme catalyses L-citrulline + L-aspartate + ATP = 2-(N(omega)-L-arginino)succinate + AMP + diphosphate + H(+). It functions in the pathway amino-acid biosynthesis; L-arginine biosynthesis; L-arginine from L-ornithine and carbamoyl phosphate: step 2/3. In Mycobacterium avium (strain 104), this protein is Argininosuccinate synthase.